We begin with the raw amino-acid sequence, 141 residues long: Vesicle-associated membrane protein 4 (141 aa).

Residues Met1 to Asp51 are disordered. Over Met1–Lys115 the chain is Cytoplasmic. Phosphoserine occurs at positions 17 and 30. In terms of domain architecture, v-SNARE coiled-coil homology spans Lys52–Arg112. The helical; Anchor for type IV membrane protein transmembrane segment at Ile116–Val136 threads the bilayer. The Vesicular segment spans residues Met137–Thr141.

This sequence belongs to the synaptobrevin family. As to quaternary structure, identified in a complex containing STX6, STX12, VAMP4 and VTI1A. Interacts with BAIAP3; this interaction is increased in the presence of calcium.

It localises to the golgi apparatus. It is found in the trans-Golgi network membrane. In terms of biological role, involved in the pathway that functions to remove an inhibitor (probably synaptotagmin-4) of calcium-triggered exocytosis during the maturation of secretory granules. May be a marker for this sorting pathway that is critical for remodeling the secretory response of granule. The chain is Vesicle-associated membrane protein 4 (VAMP4) from Homo sapiens (Human).